The chain runs to 217 residues: Adenylate kinase (217 aa).

10–15 lines the ATP pocket; sequence GAGKGT. Residues 30-59 form an NMP region; it reads STGDMFREAIKRGTPLGRQAEVYIKGGRLV. Residues T31, R36, 57–59, 85–88, and Q92 each bind AMP; these read RLV and GFPR. An LID region spans residues 126 to 163; it reads GRRVCRQCGATYHVRYNPPAVPGKCDACGQDLVQRADD. R127 provides a ligand contact to ATP. The Zn(2+) site is built by C130 and C133. An ATP-binding site is contributed by 136-137; the sequence is TY. Zn(2+) is bound by residues C150 and C153. Residues R160 and R171 each coordinate AMP. Residue Q199 coordinates ATP.

It belongs to the adenylate kinase family. In terms of assembly, monomer.

The protein resides in the cytoplasm. The enzyme catalyses AMP + ATP = 2 ADP. It participates in purine metabolism; AMP biosynthesis via salvage pathway; AMP from ADP: step 1/1. Catalyzes the reversible transfer of the terminal phosphate group between ATP and AMP. Plays an important role in cellular energy homeostasis and in adenine nucleotide metabolism. The protein is Adenylate kinase of Moorella thermoacetica (strain ATCC 39073 / JCM 9320).